A 1164-amino-acid polypeptide reads, in one-letter code: Toxin subunit YenA1 (1164 aa).

The disordered stretch occupies residues 106–131 (RLEKSNSPLVPQTSSSTDASSESQTN). Over residues 118-130 (TSSSTDASSESQT) the composition is skewed to low complexity.

Semipurified toxin complex consists of at least YenA1, YenA2, YenB, YenC1, YenC2, Chi1 and Chi2. The Yen-TC:K9 subcomplex is about 26 nm tall and 22 nm in diameter with 5-fold symmetry and 5 copies of YenA1, YenA2, Chi1 and Chi2; the chitinase subunits may be solvent accessible on the exterior the complex. The Yen-TC:K9 subcomplex has no insecticidal activity. The native complex with additional YenB, YenC1 and YenC2 subunits is 16 nm taller and is insecticidal; the toxicity-conferring subunits are present at about 1 copy each.

It localises to the secreted. With respect to regulation, toxin complex is secreted when grown at 25 degrees Celsius or less; at higher temperatures the proteins are present intracellularly but not secreted. Part of an orally active toxin complex (TC) with strong insecticidal effects on larvae of the Coleoptera Costelytra zealandica, Acrossidius tasmania and Adoryphorus couloni and some Lepidoptera larvae. The TC has an endochitinase activity. The protein is Toxin subunit YenA1 of Yersinia entomophaga.